A 20-amino-acid chain; its full sequence is Unknown protein NF007 from 2D-PAGE (20 aa).

This chain is Unknown protein NF007 from 2D-PAGE, found in Naegleria fowleri (Brain eating amoeba).